The sequence spans 180 residues: Large ribosomal subunit protein uL6 (180 aa).

The protein belongs to the universal ribosomal protein uL6 family. In terms of assembly, part of the 50S ribosomal subunit.

Its function is as follows. This protein binds to the 23S rRNA, and is important in its secondary structure. It is located near the subunit interface in the base of the L7/L12 stalk, and near the tRNA binding site of the peptidyltransferase center. This Borreliella afzelii (strain PKo) (Borrelia afzelii) protein is Large ribosomal subunit protein uL6.